The following is a 261-amino-acid chain: Neurovirulence factor ICP34.5 (261 aa).

Residues 1-17 show a composition bias toward basic residues; that stretch reads MSRRRGPRRRGPRRRPR. The tract at residues 1 to 19 is required for nucleolar localization; sequence MSRRRGPRRRGPRRRPRPG. Disordered regions lie at residues 1–59, 75–135, and 145–164; these read MSRR…SAPA, DSDD…LALR, and RLSL…APRG. 4 consecutive repeats follow at residues 3-7, 8-12, 16-23, and 24-31; these read RRRGP and PRPGAPAV. The interval 3–12 is 2 X 5 AA tandem repeats of R-R-R-G-P; the sequence is RRRGPRRRGP. Residues 16-31 form a 2 X 8 AA tandem repeats of P-R-P-G-A-P-A-V region; it reads PRPGAPAVPRPGAPAV. Residues 18-32 are compositionally biased toward pro residues; that stretch reads PGAPAVPRPGAPAVP. Acidic residues predominate over residues 75 to 88; the sequence is DSDDADYAGNDDAE. Over residues 101–111 the composition is skewed to low complexity; that stretch reads APEAPHAAPAA. Residues 128-137 carry the Nuclear export signal motif; sequence LPPHLALRLR. The segment at 163–176 is binding to PP1CA; that stretch reads RGKVCFSPRVQVRH. An interaction with host PPP1CA region spans residues 163 to 176; the sequence is RGKVCFSPRVQVRH. The tract at residues 178–261 is important for interferon resistance; the sequence is VAWETAARLA…AAAGPGRRAV (84 aa). Positions 188-206 match the Bipartite nuclear localization signal motif; that stretch reads RRGSWARERADRDRFRRRV. Residues 206-221 form an interaction with host EIF2S1/EIF-2ALPHA region; sequence VAAAEAVIGPCLEPEA. The disordered stretch occupies residues 223–261; it reads ARARARARAHEDGGPAEEEEAAAAARGSSAAAGPGRRAV. Over residues 244 to 261 the composition is skewed to low complexity; sequence AAAARGSSAAAGPGRRAV.

It belongs to the PPP1R15 family. Interacts with host PPP1CA to form a high-molecular-weight complex that dephosphorylates EIF2S1/eIF-2alpha. Interacts with host EIF2S1/eIF-2alpha; this interaction is crucial for the specific dephosphorylation of EIF2S1/eIF-2alpha by PPP1CA.

It is found in the host cytoplasm. It localises to the host nucleus. The protein resides in the host nucleolus. The protein localises to the virion. Its function is as follows. Plays essential roles in viral nuclear egress to mediate capsid transit across the nuclear membrane and also in the inhibition of host immune response and integrated stress response (ISR). Facilitates nuclear egress cooperatively with host C1QBP and protein kinase C/PKC to induce lamin A/C phosphorylation and subsequent reorganization. In turn, lamina disassembles and nuclear egress occurs. Recruits the serine/threonine-protein phosphatase PPP1CA/PP1-alpha to dephosphorylate the translation initiation factor EIF2S1/eIF-2alpha, thereby couteracting the host shutoff of protein synthesis involving double-stranded RNA-dependent protein kinase EIF2AK2/PKR. Also down-modulates the host MHC class II proteins cell surface expression. Acts as a neurovirulence factor that has a profound effect on the growth of the virus in central nervous system tissue, probably through its ability to maintain an environment favorable for viral replication. The chain is Neurovirulence factor ICP34.5 (RL1) from Human herpesvirus 2 (strain HG52) (HHV-2).